A 101-amino-acid chain; its full sequence is Phosphoprotein OPG062 (101 aa).

A disordered region spans residues 50–73; the sequence is KPSSPTCERRPSSPSRCERMNNPG. The segment covering 56–68 has biased composition (basic and acidic residues); that stretch reads CERRPSSPSRCER.

It belongs to the orthopoxvirus OPG062 family. Self-associates to form high molecular-weight forms. Interacts with protein OPG157. Interacts with host RICTOR and RPTOR; these interactions disrupt the mTORC1 and mTORC2 crosstalk.

Its subcellular location is the virion. Plays an essential role in virion assembly and morphogenesis. Also plays a role in the inhibition of host immune response by dysregulating mTOR. Sequesters host RICTOR and RPTOR, thereby disrupting mTORC1 and mTORC2 crosstalk. In turn, blocks the host antiviral response in part through mTOR-dependent degradation of cGAS, the primary poxvirus sensor. This Monkeypox virus protein is Phosphoprotein OPG062 (OPG062).